A 148-amino-acid polypeptide reads, in one-letter code: Ubiquitin-conjugating enzyme E2 8 (148 aa).

The region spanning 1 to 147 (MASKRILKEL…ARNWTQKYAM (147 aa)) is the UBC core domain. Cys85 (glycyl thioester intermediate) is an active-site residue.

Belongs to the ubiquitin-conjugating enzyme family. In terms of assembly, interacts with CIP8, CHIP, NLA and XERICO. In terms of tissue distribution, highest expression in young stems, old leaves. Lowest levels in floral buds, anthers and young leaves.

The catalysed reaction is S-ubiquitinyl-[E1 ubiquitin-activating enzyme]-L-cysteine + [E2 ubiquitin-conjugating enzyme]-L-cysteine = [E1 ubiquitin-activating enzyme]-L-cysteine + S-ubiquitinyl-[E2 ubiquitin-conjugating enzyme]-L-cysteine.. The protein operates within protein modification; protein ubiquitination. In terms of biological role, accepts the ubiquitin from the E1 complex and catalyzes its covalent attachment to other proteins. Mediates the selective degradation of short-lived and abnormal proteins. The chain is Ubiquitin-conjugating enzyme E2 8 (UBC8) from Arabidopsis thaliana (Mouse-ear cress).